The primary structure comprises 215 residues: Protein C' (215 aa).

The interval 12-34 (MPSFLKKILKLRGRRQEDESRSR) is disordered. The involved in self-degradation and in host STAT1 degradation stretch occupies residues 15–22 (FLKKILKL). Positions 25–35 (RRQEDESRSRM) are enriched in basic and acidic residues. The segment covering 36–66 (LSDSSTQSYQVNQLTSEGTEAGSTIPSTPSK) has biased composition (polar residues).

The protein belongs to the respirovirus protein C family. In terms of assembly, the different isoforms interact (via C-terminus) with unphosphorylated and phosphorylated human STAT1 (via N-terminus), favoring the formation of parallel STAT1 homodimers. The different isoforms do not interact with host STAT2. C protein interacts with L protein; this interaction has an inhibitory effect on viral transcription and replication. In terms of processing, protein Y1 is produced not only by alternative initiation, but also by proteolytic cleavage of C'. Only alternative initiation is detected in vitro, whereas in vivo cleavage seems to be predominant.

The protein localises to the host cytoplasm. Functionally, the different products prevent the establishment of cellular antiviral state by blocking the interferon-alpha/beta (IFN-alpha/beta) and IFN-gamma signaling pathways. They inhibit IFN-alpha/beta induced tyrosine phosphorylation of STAT1 and STAT2. Blocking the IFN-alpha/beta pathway requires binding to STAT1 in the cytoplasm. They inhibit IFN-gamma induced serine phosphorylation of STAT1. Block the IFN-gamma pathway by binding to and stabilizing the parallel form of the STAT1 dimer, further inducing high-molecular-weight complex formation and inhibition of transcription by IFN-gamma. May also have a role in preventing the cell to enter apoptosis. Modulate regulation of viral transcription and replication. Overexpression inhibits the viral RNA polymerase. The absence of all C', C and Y1 proteins leads to viral delayed growth. Plays an important role in virion particles release. Modulates virion shape. The sequence is that of Protein C' (P/V/C) from Sendai virus (strain Ohita) (SeV).